A 525-amino-acid polypeptide reads, in one-letter code: GMP synthase [glutamine-hydrolyzing] (525 aa).

One can recognise a Glutamine amidotransferase type-1 domain in the interval 8–207 (KILILDFGSQ…ALDICECEAN (200 aa)). Cys-85 serves as the catalytic Nucleophile. Catalysis depends on residues His-181 and Glu-183. Residues 208–400 (WKPTSIIEDA…LGLPYDMLYR (193 aa)) form the GMPS ATP-PPase domain. Residue 235–241 (SGGVDSS) participates in ATP binding.

As to quaternary structure, homodimer.

It carries out the reaction XMP + L-glutamine + ATP + H2O = GMP + L-glutamate + AMP + diphosphate + 2 H(+). It functions in the pathway purine metabolism; GMP biosynthesis; GMP from XMP (L-Gln route): step 1/1. Functionally, catalyzes the synthesis of GMP from XMP. In Shewanella sediminis (strain HAW-EB3), this protein is GMP synthase [glutamine-hydrolyzing].